Consider the following 432-residue polypeptide: Ribosome biogenesis protein WDR12 homolog (432 aa).

Residues 13–97 are ubiquitin-like (UBL) domain; it reads LQIRLVALNK…ESVIEVVYFQ (85 aa). 7 WD repeats span residues 109 to 146, 148 to 190, 197 to 236, 265 to 303, 305 to 345, 352 to 392, and 396 to 432; these read LHSD…YAIF, GHES…KSVE, GHTQ…KDDD, GHTD…NKSD, NVNK…DQTV, SHKN…APLY, and GHED…AQRS.

This sequence belongs to the WD repeat WDR12/YTM1 family.

It is found in the nucleus. Its subcellular location is the nucleolus. The protein resides in the nucleoplasm. Required for maturation of ribosomal RNAs and formation of the large ribosomal subunit. In Trichoplax adhaerens (Trichoplax reptans), this protein is Ribosome biogenesis protein WDR12 homolog.